A 167-amino-acid chain; its full sequence is Dimethylamine corrinoid protein 3 (167 aa).

The B12-binding N-terminal domain maps to 1–44; the sequence is MNEVGVRFERGKLFLPHVMMAADAMTAGVNALKDLMPEGSASSK. In terms of domain architecture, B12-binding spans 45–167; the sequence is MGVIVNGTVE…AVTKAKELLA (123 aa). A methylcob(III)alamin-binding site is contributed by H58.

Belongs to the methylamine corrinoid protein family.

It functions in the pathway one-carbon metabolism; methanogenesis from dimethylamine. Acts as a methyl group carrier between MtbB and MtbA. The chain is Dimethylamine corrinoid protein 3 (mtbC3) from Methanosarcina mazei (strain ATCC BAA-159 / DSM 3647 / Goe1 / Go1 / JCM 11833 / OCM 88) (Methanosarcina frisia).